We begin with the raw amino-acid sequence, 94 residues long: MRTIAILAAILLFALLAQAKSLQETADEAATQEQPGEDDQDLAVSFEENGLSTLRASGSQARRTCRCRFGRCFRRESYSGSCNINGRISSLCCR.

A signal peptide spans Met1 to Ala19. Positions Lys20–Ala61 are excised as a propeptide. Cystine bridges form between Cys65-Cys93, Cys67-Cys82, and Cys72-Cys92.

Belongs to the alpha-defensin family.

It is found in the secreted. Functionally, defensins 6 and 7 have bacteriostatic activity against Gram-positive bacteria S.aureus and L.monocytogenes and Gram-negative bacterium E.coli and antifungal activity against C.neoformans. Defensin 7 has microbicidial activity against Gram-positive bacteria S.aureus and L.monocytogenes. The chain is Neutrophil defensin 6 from Macaca mulatta (Rhesus macaque).